A 367-amino-acid polypeptide reads, in one-letter code: 5-amino-6-(D-ribitylamino)uracil--L-tyrosine 4-hydroxyphenyl transferase (367 aa).

The Radical SAM core domain occupies 54–288 (ITYIENWNIN…VYAISRLMFR (235 aa)). 3 residues coordinate [4Fe-4S] cluster: cysteine 68, cysteine 72, and cysteine 75.

It belongs to the radical SAM superfamily. CofH family. In terms of assembly, consists of two subunits, CofG and CofH. Requires [4Fe-4S] cluster as cofactor.

The catalysed reaction is 5-amino-6-(D-ribitylamino)uracil + L-tyrosine + S-adenosyl-L-methionine = 5-amino-5-(4-hydroxybenzyl)-6-(D-ribitylimino)-5,6-dihydrouracil + 2-iminoacetate + 5'-deoxyadenosine + L-methionine + H(+). The protein operates within cofactor biosynthesis; coenzyme F0 biosynthesis. In terms of biological role, catalyzes the radical-mediated synthesis of 5-amino-5-(4-hydroxybenzyl)-6-(D-ribitylimino)-5,6-dihydrouracil from 5-amino-6-(D-ribitylamino)uracil and L-tyrosine. This Methanothermobacter thermautotrophicus (strain ATCC 29096 / DSM 1053 / JCM 10044 / NBRC 100330 / Delta H) (Methanobacterium thermoautotrophicum) protein is 5-amino-6-(D-ribitylamino)uracil--L-tyrosine 4-hydroxyphenyl transferase.